A 519-amino-acid chain; its full sequence is Alternative NAD(P)H-ubiquinone oxidoreductase C1, chloroplastic/mitochondrial (519 aa).

The N-terminal 52 residues, 1 to 52, are a transit peptide targeting the chloroplast and mitochondrion; that stretch reads MAVLSSVSSLIPFSYGATRLTSKASLASRTSGFNLSSRWNSTRNSPMLYLSR. Residue 82 to 118 coordinates FAD; it reads RVCILGGGFGGLYTALRLESLVWPEDKKPQVVLVDQS. NAD(+) is bound at residue 246–282; sequence IKVAVVGCGYAGVELAATISERLQDRGIVQSINVSKN.

It belongs to the NADH dehydrogenase family. Requires FAD as cofactor. Flowers, roots, leaves and stems.

It is found in the mitochondrion. The protein resides in the mitochondrion inner membrane. It localises to the plastid. The protein localises to the chloroplast. Its subcellular location is the plastoglobule. It catalyses the reaction a quinone + NADH + H(+) = a quinol + NAD(+). It carries out the reaction a ubiquinone + NADH + H(+) = a ubiquinol + NAD(+). The enzyme catalyses demethylphylloquinone + NADPH + H(+) = demethylphylloquinol + NADP(+). With respect to regulation, inhibited by dicumarol. Bifunctional oxidoreductase ables to act both on prenyl naphthoquinones and on prenyl benzoquinones. May serve a respiratory function. Involved in an electron flow toward the plastoglobule plastoquinone pool. Required for plastochromanol-8 accumulation and for phylloquinone (vitamin K1) production. Probably not directly involved in cyclic or chlororespiratory electron flows under standard growth conditions, but participates in the redox metabolism of plastoquinone-9 and the tocophrol recycling-intermediate alpha-tocopherol quinone. Catalyzes the penultimate step in the biosynthesis of vitamin K1. This is Alternative NAD(P)H-ubiquinone oxidoreductase C1, chloroplastic/mitochondrial from Arabidopsis thaliana (Mouse-ear cress).